We begin with the raw amino-acid sequence, 316 residues long: Coiled-coil domain-containing protein 42 (316 aa).

Coiled coils occupy residues 39–146 (SPSI…SAKL) and 178–232 (LVSM…DRAR).

It belongs to the CFAP73 family. In terms of assembly, interacts with ODF1 and ODF2. Interacts with CCDC38. Interacts with CCDC146. Interacts with CFAP53.

The protein localises to the cytoplasm. The protein resides in the perinuclear region. Its subcellular location is the cytoskeleton. It localises to the cell projection. It is found in the cilium. The protein localises to the flagellum. The protein resides in the microtubule organizing center. Its subcellular location is the centrosome. Essential for male fertility. Required for sperm development. The protein is Coiled-coil domain-containing protein 42 of Homo sapiens (Human).